Here is a 322-residue protein sequence, read N- to C-terminus: Putative heme-binding peroxidase (322 aa).

His-38 serves as the catalytic Proton acceptor. Heme b is bound at residue His-162. The active-site Tryptophan radical intermediate is the Trp-178. Positions Ile-288–Leu-322 are disordered.

Belongs to the peroxidase family. Cytochrome c peroxidase subfamily. Heme b serves as cofactor.

In terms of biological role, destroys radicals which are normally produced within the cells and which are toxic to biological systems. The protein is Putative heme-binding peroxidase of Aspergillus fumigatus (strain ATCC MYA-4609 / CBS 101355 / FGSC A1100 / Af293) (Neosartorya fumigata).